Here is a 273-residue protein sequence, read N- to C-terminus: Light-independent protochlorophyllide reductase iron-sulfur ATP-binding protein (273 aa).

Residues 12–17 and lysine 41 contribute to the ATP site; that span reads GIGKST. Position 16 (serine 16) interacts with Mg(2+). Residues cysteine 97 and cysteine 131 each contribute to the [4Fe-4S] cluster site. 182–183 serves as a coordination point for ATP; it reads NR.

The protein belongs to the NifH/BchL/ChlL family. In terms of assembly, homodimer. Protochlorophyllide reductase is composed of three subunits; BchL, BchN and BchB. [4Fe-4S] cluster serves as cofactor.

It catalyses the reaction chlorophyllide a + oxidized 2[4Fe-4S]-[ferredoxin] + 2 ADP + 2 phosphate = protochlorophyllide a + reduced 2[4Fe-4S]-[ferredoxin] + 2 ATP + 2 H2O. It participates in porphyrin-containing compound metabolism; bacteriochlorophyll biosynthesis (light-independent). Component of the dark-operative protochlorophyllide reductase (DPOR) that uses Mg-ATP and reduced ferredoxin to reduce ring D of protochlorophyllide (Pchlide) to form chlorophyllide a (Chlide). This reaction is light-independent. The L component serves as a unique electron donor to the NB-component of the complex, and binds Mg-ATP. This Chloroflexus aurantiacus (strain ATCC 29364 / DSM 637 / Y-400-fl) protein is Light-independent protochlorophyllide reductase iron-sulfur ATP-binding protein.